Reading from the N-terminus, the 550-residue chain is ATP synthase subunit alpha (550 aa).

172 to 179 (GDRKTGKT) provides a ligand contact to ATP. The segment at 514–550 (EDEQRVNEPPAKPLAGEENRETVTRFRDGTTDRPAES) is disordered. Residues 528–550 (AGEENRETVTRFRDGTTDRPAES) are compositionally biased toward basic and acidic residues.

Belongs to the ATPase alpha/beta chains family. In terms of assembly, F-type ATPases have 2 components, CF(1) - the catalytic core - and CF(0) - the membrane proton channel. CF(1) has five subunits: alpha(3), beta(3), gamma(1), delta(1), epsilon(1). CF(0) has three main subunits: a(1), b(2) and c(9-12). The alpha and beta chains form an alternating ring which encloses part of the gamma chain. CF(1) is attached to CF(0) by a central stalk formed by the gamma and epsilon chains, while a peripheral stalk is formed by the delta and b chains.

Its subcellular location is the cell membrane. The catalysed reaction is ATP + H2O + 4 H(+)(in) = ADP + phosphate + 5 H(+)(out). Produces ATP from ADP in the presence of a proton gradient across the membrane. The alpha chain is a regulatory subunit. The polypeptide is ATP synthase subunit alpha (Salinispora arenicola (strain CNS-205)).